A 208-amino-acid polypeptide reads, in one-letter code: Small ribosomal subunit protein uS4 (208 aa).

The S4 RNA-binding domain maps to 98–161; that stretch reads QRLDNVVYRM…KTNPQIVRAI (64 aa).

The protein belongs to the universal ribosomal protein uS4 family. Part of the 30S ribosomal subunit. Contacts protein S5. The interaction surface between S4 and S5 is involved in control of translational fidelity.

Functionally, one of the primary rRNA binding proteins, it binds directly to 16S rRNA where it nucleates assembly of the body of the 30S subunit. Its function is as follows. With S5 and S12 plays an important role in translational accuracy. This chain is Small ribosomal subunit protein uS4, found in Campylobacter fetus subsp. fetus (strain 82-40).